The primary structure comprises 275 residues: MRLLDGRSMAADIGRSVVDDVERLATTGVTPTLAVVLPTADEAARSYVRVIERGAAKVGVGCAVHELTGDPDELTATVDRLAADPAVHGMIVQTPLPDGLTAADVGARIPVGKDVDGMNPLSLGRLALGLPAFAPATAAAVLEILNRAAVPLAGARACVIGRSSVVGKPAALLLLAEDATVTVCHSRTKDLATVAHDADIVVAAVGRPKMVGAGHVRPGAVVIDVGTNWTDAGLVGDVDADAVAPVAGALTPVPGGVGPVTTMLLLRNTVRAAGG.

Residues 161 to 163, serine 186, and threonine 227 contribute to the NADP(+) site; that span reads GRS.

Belongs to the tetrahydrofolate dehydrogenase/cyclohydrolase family. Homodimer.

It catalyses the reaction (6R)-5,10-methylene-5,6,7,8-tetrahydrofolate + NADP(+) = (6R)-5,10-methenyltetrahydrofolate + NADPH. The catalysed reaction is (6R)-5,10-methenyltetrahydrofolate + H2O = (6R)-10-formyltetrahydrofolate + H(+). The protein operates within one-carbon metabolism; tetrahydrofolate interconversion. Its function is as follows. Catalyzes the oxidation of 5,10-methylenetetrahydrofolate to 5,10-methenyltetrahydrofolate and then the hydrolysis of 5,10-methenyltetrahydrofolate to 10-formyltetrahydrofolate. In Parafrankia sp. (strain EAN1pec), this protein is Bifunctional protein FolD.